We begin with the raw amino-acid sequence, 295 residues long: Transcriptional regulator SirC (295 aa).

The region spanning 195 to 292 (EKVYNIIISD…KITPLSFMRT (98 aa)) is the HTH araC/xylS-type domain. 2 consecutive DNA-binding regions (H-T-H motif) follow at residues 212–233 (AEVA…AAEE) and 259–282 (ISQV…KRHF).

Positive regulator of the expression of the invasion-associated type III secretion system encoded within SPI-1 (pathogenicity island 1). The polypeptide is Transcriptional regulator SirC (sirC) (Salmonella typhimurium (strain SL1344)).